Here is a 231-residue protein sequence, read N- to C-terminus: 2-amino-5-formylamino-6-ribosylaminopyrimidin-4(3H)-one 5'-monophosphate deformylase (231 aa).

Fe cation is bound by residues glutamate 29, histidine 31, aspartate 40, and histidine 110.

This sequence belongs to the creatininase superfamily. FAPy deformylase family. As to quaternary structure, homodimer. Fe(2+) is required as a cofactor. Requires Zn(2+) as cofactor.

It catalyses the reaction 2-amino-5-formylamino-6-(5-phospho-D-ribosylamino)pyrimidin-4(3H)-one + H2O = 2,5-diamino-6-(1-D-ribosylamino)pyrimidin-4(3H)-one 5'-phosphate + formate + H(+). It participates in cofactor biosynthesis; coenzyme F420 biosynthesis. The protein operates within cofactor biosynthesis; riboflavin biosynthesis. Catalyzes the hydrolysis of the formamide of 2-amino-5-formylamino-6-ribosylamino-4(3H)-pyrimidinone 5'-monophosphate (FAPy) to form 2,5-diamino-6-ribosylamino-4(3H)-pyrimidinone 5'-phosphate (APy). The sequence is that of 2-amino-5-formylamino-6-ribosylaminopyrimidin-4(3H)-one 5'-monophosphate deformylase from Methanothermobacter marburgensis (strain ATCC BAA-927 / DSM 2133 / JCM 14651 / NBRC 100331 / OCM 82 / Marburg) (Methanobacterium thermoautotrophicum).